Consider the following 332-residue polypeptide: DNA-directed RNA polymerase subunit alpha (332 aa).

The interval 1–230 (MKKITTSAYM…KQMSIFNNVL (230 aa)) is alpha N-terminal domain (alpha-NTD). An alpha C-terminal domain (alpha-CTD) region spans residues 246-332 (EHSKLLESVE…LRKKISELKS (87 aa)).

The protein belongs to the RNA polymerase alpha chain family. Homodimer. The RNAP catalytic core consists of 2 alpha, 1 beta, 1 beta' and 1 omega subunit. When a sigma factor is associated with the core the holoenzyme is formed, which can initiate transcription.

The enzyme catalyses RNA(n) + a ribonucleoside 5'-triphosphate = RNA(n+1) + diphosphate. In terms of biological role, DNA-dependent RNA polymerase catalyzes the transcription of DNA into RNA using the four ribonucleoside triphosphates as substrates. This Campylobacter fetus subsp. fetus (strain 82-40) protein is DNA-directed RNA polymerase subunit alpha.